The following is a 317-amino-acid chain: Ret finger protein-like 3 (317 aa).

The segment at 40–82 (CPVCSDYLEKPMSLECGCTVCLKCINSLQKEPHGEDLLCCCCS) adopts an RING-type zinc-finger fold. Positions 107-301 (EPKLKKILQM…DQGVLSICPL (195 aa)) constitute a B30.2/SPRY domain.

Expressed during neurogenesis in differentiating human embryonic stem cells and in the developing human neocortex.

The protein localises to the cytoplasm. The protein resides in the nucleus. Functionally, (Microbial infection) Stimulates the activity of Human Immunodeficiency Virus 1/HIV-1 pre-integration complex. This is Ret finger protein-like 3 (RFPL3) from Homo sapiens (Human).